A 309-amino-acid polypeptide reads, in one-letter code: ESX-3 secretion system protein EccE3 (309 aa).

The next 2 membrane-spanning stretches (helical) occupy residues 5–25 (IALASLFVVAAVLAQPWQTTT) and 29–49 (VLGVSIAAVIVLLAWWKGMFL).

Belongs to the EccE family. As to quaternary structure, part of the ESX-3 / type VII secretion system (T7SS), which is composed of cytosolic and membrane components. The ESX-3 membrane complex is composed of EccB3, EccC3, EccD3 and EccE3.

It localises to the cell inner membrane. Functionally, part of the ESX-3 specialized secretion system, which is required for siderophore-mediated iron acquisition and for the secretion of EsxH and EsxG. The chain is ESX-3 secretion system protein EccE3 from Mycolicibacterium smegmatis (strain ATCC 700084 / mc(2)155) (Mycobacterium smegmatis).